Consider the following 190-residue polypeptide: dTTP/UTP pyrophosphatase (190 aa).

Asp-71 (proton acceptor) is an active-site residue.

The protein belongs to the Maf family. YhdE subfamily. A divalent metal cation serves as cofactor.

The protein localises to the cytoplasm. It catalyses the reaction dTTP + H2O = dTMP + diphosphate + H(+). The enzyme catalyses UTP + H2O = UMP + diphosphate + H(+). Its function is as follows. Nucleoside triphosphate pyrophosphatase that hydrolyzes dTTP and UTP. May have a dual role in cell division arrest and in preventing the incorporation of modified nucleotides into cellular nucleic acids. The chain is dTTP/UTP pyrophosphatase from Xanthomonas campestris pv. campestris (strain ATCC 33913 / DSM 3586 / NCPPB 528 / LMG 568 / P 25).